The primary structure comprises 404 residues: G2/mitotic-specific cyclin-B1 (404 aa).

Belongs to the cyclin family. Cyclin AB subfamily. Interacts with the CDK1 protein kinase to form a serine/threonine kinase holoenzyme complex also known as maturation promoting factor (MPF). The cyclin subunit imparts substrate specificity to the complex.

Essential for the control of the cell cycle at the G2/M (mitosis) transition. The chain is G2/mitotic-specific cyclin-B1 (ccnb1) from Oryzias latipes (Japanese rice fish).